A 494-amino-acid chain; its full sequence is Ketol-acid reductoisomerase (NADP(+)) (494 aa).

A KARI N-terminal Rossmann domain is found at 14-208 (LDQLGRCRFM…GGHRAGCLES (195 aa)). NADP(+) is bound by residues 45–48 (CGAQ), Arg-68, Arg-76, Ser-78, and 108–110 (DKQ). His-132 is a catalytic residue. Gly-158 provides a ligand contact to NADP(+). KARI C-terminal knotted domains follow at residues 209–344 (SFVA…NYPA) and 345–487 (SDVE…MSDM). Residues Asp-217, Glu-221, Glu-389, and Glu-393 each contribute to the Mg(2+) site. Ser-414 contacts substrate.

Belongs to the ketol-acid reductoisomerase family. The cofactor is Mg(2+).

The catalysed reaction is (2R)-2,3-dihydroxy-3-methylbutanoate + NADP(+) = (2S)-2-acetolactate + NADPH + H(+). The enzyme catalyses (2R,3R)-2,3-dihydroxy-3-methylpentanoate + NADP(+) = (S)-2-ethyl-2-hydroxy-3-oxobutanoate + NADPH + H(+). It functions in the pathway amino-acid biosynthesis; L-isoleucine biosynthesis; L-isoleucine from 2-oxobutanoate: step 2/4. It participates in amino-acid biosynthesis; L-valine biosynthesis; L-valine from pyruvate: step 2/4. Its function is as follows. Involved in the biosynthesis of branched-chain amino acids (BCAA). Catalyzes an alkyl-migration followed by a ketol-acid reduction of (S)-2-acetolactate (S2AL) to yield (R)-2,3-dihydroxy-isovalerate. In the isomerase reaction, S2AL is rearranged via a Mg-dependent methyl migration to produce 3-hydroxy-3-methyl-2-ketobutyrate (HMKB). In the reductase reaction, this 2-ketoacid undergoes a metal-dependent reduction by NADPH to yield (R)-2,3-dihydroxy-isovalerate. The chain is Ketol-acid reductoisomerase (NADP(+)) from Vibrio atlanticus (strain LGP32) (Vibrio splendidus (strain Mel32)).